Consider the following 78-residue polypeptide: ATP synthase subunit a (78 aa).

A run of 3 helical transmembrane segments spans residues 13–33 (LFGN…LGTS), 35–55 (FLGA…GMFI), and 57–77 (SLQA…KVEA).

The protein belongs to the ATPase A chain family. As to quaternary structure, F-type ATPases have 2 components, CF(1) - the catalytic core - and CF(0) - the membrane proton channel. CF(1) has five subunits: alpha(3), beta(3), gamma(1), delta(1), epsilon(1). CF(0) has three main subunits: a(1), b(2) and c(9-12). The alpha and beta chains form an alternating ring which encloses part of the gamma chain. CF(1) is attached to CF(0) by a central stalk formed by the gamma and epsilon chains, while a peripheral stalk is formed by the delta and b chains.

The protein localises to the cell membrane. Key component of the proton channel; it plays a direct role in the translocation of protons across the membrane. This Alkalihalobacillus alcalophilus (Bacillus alcalophilus) protein is ATP synthase subunit a (atpB).